A 323-amino-acid chain; its full sequence is Zinc finger C2HC domain-containing protein 1A (323 aa).

A C2HC/C3H-type 1 zinc finger spans residues Glu7–Lys36. The Zn(2+) site is built by Cys11, Cys14, His26, and Cys30. A disordered region spans residues Val35–Lys75. A compositionally biased stretch (basic and acidic residues) spans Thr40–Gly50. Residues Asp110 to Arg139 form a C2HC/C3H-type 2 zinc finger. 4 residues coordinate Zn(2+): Cys114, Cys117, His129, and Cys133. The interval Ala138–Asp273 is disordered. Polar residues predominate over residues Lys208–Gln226.

The protein belongs to the ZC2HC1 family. The cofactor is Zn(2+).

This is Zinc finger C2HC domain-containing protein 1A (zc2hc1a) from Xenopus laevis (African clawed frog).